Here is a 216-residue protein sequence, read N- to C-terminus: MKFFIDTANFEEIKEAHAWGILSGVTTNPSLVAKEENVSFHDRLREIAELVDGSVSGEVIALDAEGMIKEGLELAAIAPNITVKLPMTPAGLEACRFFANKGIKTNVTLIFSANQALMAARAGATYVSPFIGRLDDIGQNGVELIETIADMFTIHNIDTQIIAASVRHPQHVTAAALAGAHISTTPFKVLKQLFHHPLTEKGIEGFLADWNKRKGE.

Lys-84 functions as the Schiff-base intermediate with substrate in the catalytic mechanism.

The protein belongs to the transaldolase family. Type 3B subfamily.

It localises to the cytoplasm. It catalyses the reaction D-sedoheptulose 7-phosphate + D-glyceraldehyde 3-phosphate = D-erythrose 4-phosphate + beta-D-fructose 6-phosphate. The protein operates within carbohydrate degradation; pentose phosphate pathway; D-glyceraldehyde 3-phosphate and beta-D-fructose 6-phosphate from D-ribose 5-phosphate and D-xylulose 5-phosphate (non-oxidative stage): step 2/3. In terms of biological role, transaldolase is important for the balance of metabolites in the pentose-phosphate pathway. This Lysinibacillus sphaericus (strain C3-41) protein is Probable transaldolase.